A 91-amino-acid polypeptide reads, in one-letter code: CRISPR-associated endoribonuclease Cas2 2 (91 aa).

Position 10 (Asp-10) interacts with Mg(2+).

It belongs to the CRISPR-associated endoribonuclease Cas2 protein family. Homodimer, forms a heterotetramer with a Cas1 homodimer. Requires Mg(2+) as cofactor.

Functionally, CRISPR (clustered regularly interspaced short palindromic repeat), is an adaptive immune system that provides protection against mobile genetic elements (viruses, transposable elements and conjugative plasmids). CRISPR clusters contain sequences complementary to antecedent mobile elements and target invading nucleic acids. CRISPR clusters are transcribed and processed into CRISPR RNA (crRNA). Functions as a ssRNA-specific endoribonuclease. Involved in the integration of spacer DNA into the CRISPR cassette. This is CRISPR-associated endoribonuclease Cas2 2 from Thermodesulfovibrio yellowstonii (strain ATCC 51303 / DSM 11347 / YP87).